The following is a 494-amino-acid chain: Lysine--tRNA ligase (494 aa).

Mg(2+) is bound by residues glutamate 405 and glutamate 412.

It belongs to the class-II aminoacyl-tRNA synthetase family. As to quaternary structure, homodimer. Requires Mg(2+) as cofactor.

The protein resides in the cytoplasm. The enzyme catalyses tRNA(Lys) + L-lysine + ATP = L-lysyl-tRNA(Lys) + AMP + diphosphate. The protein is Lysine--tRNA ligase (lysS) of Geobacillus stearothermophilus (Bacillus stearothermophilus).